A 728-amino-acid polypeptide reads, in one-letter code: Phosphoribosylformylglycinamidine synthase subunit PurL (728 aa).

Residue His54 is part of the active site. ATP contacts are provided by Tyr57 and Lys96. Glu98 is a Mg(2+) binding site. Substrate is bound by residues 99 to 102 (SHNH) and Arg121. The Proton acceptor role is filled by His100. Asp122 is a binding site for Mg(2+). Position 245 (Gln245) interacts with substrate. Asp273 provides a ligand contact to Mg(2+). A substrate-binding site is contributed by 317–319 (ETQ). ATP-binding residues include Asp495 and Gly532. Asn533 contacts Mg(2+). Position 535 (Ser535) interacts with substrate.

Belongs to the FGAMS family. As to quaternary structure, monomer. Part of the FGAM synthase complex composed of 1 PurL, 1 PurQ and 2 PurS subunits.

The protein resides in the cytoplasm. The enzyme catalyses N(2)-formyl-N(1)-(5-phospho-beta-D-ribosyl)glycinamide + L-glutamine + ATP + H2O = 2-formamido-N(1)-(5-O-phospho-beta-D-ribosyl)acetamidine + L-glutamate + ADP + phosphate + H(+). The protein operates within purine metabolism; IMP biosynthesis via de novo pathway; 5-amino-1-(5-phospho-D-ribosyl)imidazole from N(2)-formyl-N(1)-(5-phospho-D-ribosyl)glycinamide: step 1/2. Functionally, part of the phosphoribosylformylglycinamidine synthase complex involved in the purines biosynthetic pathway. Catalyzes the ATP-dependent conversion of formylglycinamide ribonucleotide (FGAR) and glutamine to yield formylglycinamidine ribonucleotide (FGAM) and glutamate. The FGAM synthase complex is composed of three subunits. PurQ produces an ammonia molecule by converting glutamine to glutamate. PurL transfers the ammonia molecule to FGAR to form FGAM in an ATP-dependent manner. PurS interacts with PurQ and PurL and is thought to assist in the transfer of the ammonia molecule from PurQ to PurL. This Macrococcus caseolyticus (strain JCSC5402) (Macrococcoides caseolyticum) protein is Phosphoribosylformylglycinamidine synthase subunit PurL.